Reading from the N-terminus, the 862-residue chain is DNA mismatch repair protein MutS (862 aa).

Glycine 608–serine 615 is a binding site for ATP.

The protein belongs to the DNA mismatch repair MutS family.

In terms of biological role, this protein is involved in the repair of mismatches in DNA. It is possible that it carries out the mismatch recognition step. This protein has a weak ATPase activity. This is DNA mismatch repair protein MutS from Borreliella afzelii (strain PKo) (Borrelia afzelii).